The sequence spans 311 residues: Aspartate carbamoyltransferase catalytic subunit (311 aa).

2 residues coordinate carbamoyl phosphate: R55 and T56. K85 contacts L-aspartate. 3 residues coordinate carbamoyl phosphate: R106, H135, and Q138. L-aspartate-binding residues include R168 and R230. Residues L268 and P269 each coordinate carbamoyl phosphate.

The protein belongs to the aspartate/ornithine carbamoyltransferase superfamily. ATCase family. As to quaternary structure, heterododecamer (2C3:3R2) of six catalytic PyrB chains organized as two trimers (C3), and six regulatory PyrI chains organized as three dimers (R2).

It catalyses the reaction carbamoyl phosphate + L-aspartate = N-carbamoyl-L-aspartate + phosphate + H(+). Its pathway is pyrimidine metabolism; UMP biosynthesis via de novo pathway; (S)-dihydroorotate from bicarbonate: step 2/3. Functionally, catalyzes the condensation of carbamoyl phosphate and aspartate to form carbamoyl aspartate and inorganic phosphate, the committed step in the de novo pyrimidine nucleotide biosynthesis pathway. The polypeptide is Aspartate carbamoyltransferase catalytic subunit (Escherichia coli O139:H28 (strain E24377A / ETEC)).